The sequence spans 476 residues: ATP synthase subunit beta (476 aa).

153 to 160 provides a ligand contact to ATP; sequence GGAGVGKT.

This sequence belongs to the ATPase alpha/beta chains family. In terms of assembly, F-type ATPases have 2 components, CF(1) - the catalytic core - and CF(0) - the membrane proton channel. CF(1) has five subunits: alpha(3), beta(3), gamma(1), delta(1), epsilon(1). CF(0) has three main subunits: a(1), b(2) and c(9-12). The alpha and beta chains form an alternating ring which encloses part of the gamma chain. CF(1) is attached to CF(0) by a central stalk formed by the gamma and epsilon chains, while a peripheral stalk is formed by the delta and b chains.

The protein localises to the cell membrane. The enzyme catalyses ATP + H2O + 4 H(+)(in) = ADP + phosphate + 5 H(+)(out). Its function is as follows. Produces ATP from ADP in the presence of a proton gradient across the membrane. The catalytic sites are hosted primarily by the beta subunits. This is ATP synthase subunit beta from Latilactobacillus sakei subsp. sakei (strain 23K) (Lactobacillus sakei subsp. sakei).